We begin with the raw amino-acid sequence, 207 residues long: Large ribosomal subunit protein uL4 (207 aa).

Positions 52 to 76 are disordered; sequence KNTSLVSGGGKKPWKQKGTGRARQG.

This sequence belongs to the universal ribosomal protein uL4 family. Part of the 50S ribosomal subunit.

One of the primary rRNA binding proteins, this protein initially binds near the 5'-end of the 23S rRNA. It is important during the early stages of 50S assembly. It makes multiple contacts with different domains of the 23S rRNA in the assembled 50S subunit and ribosome. In terms of biological role, forms part of the polypeptide exit tunnel. This Myxococcus xanthus (strain DK1622) protein is Large ribosomal subunit protein uL4.